A 459-amino-acid chain; its full sequence is ATP synthase subunit beta (459 aa).

Position 148 to 155 (148 to 155 (GGAGVGKT)) interacts with ATP.

Belongs to the ATPase alpha/beta chains family. As to quaternary structure, F-type ATPases have 2 components, CF(1) - the catalytic core - and CF(0) - the membrane proton channel. CF(1) has five subunits: alpha(3), beta(3), gamma(1), delta(1), epsilon(1). CF(0) has three main subunits: a(1), b(2) and c(9-12). The alpha and beta chains form an alternating ring which encloses part of the gamma chain. CF(1) is attached to CF(0) by a central stalk formed by the gamma and epsilon chains, while a peripheral stalk is formed by the delta and b chains.

The protein localises to the cell inner membrane. The enzyme catalyses ATP + H2O + 4 H(+)(in) = ADP + phosphate + 5 H(+)(out). In terms of biological role, produces ATP from ADP in the presence of a proton gradient across the membrane. The catalytic sites are hosted primarily by the beta subunits. In Ruthia magnifica subsp. Calyptogena magnifica, this protein is ATP synthase subunit beta.